The primary structure comprises 702 residues: Cadmium, zinc and cobalt-transporting ATPase (702 aa).

At 1-86 (MRLVKQEYVL…HIKKSADDGY (86 aa)) the chain is on the cytoplasmic side. Residues 4 to 72 (VKQEYVLDGL…KVKSIDPHVT (69 aa)) enclose the HMA domain. Cys15 and Cys18 together coordinate Cd(2+). Positions 15 and 18 each coordinate Co(2+). Zn(2+) contacts are provided by Cys15 and Cys18. Residues 87–107 (RNRMVNMLIRMAAAVILGAAA) form a helical membrane-spanning segment. At 108-116 (YLVQSGTIE) the chain is on the extracellular side. A helical transmembrane segment spans residues 117–136 (FFLFLGAYLIIGGDIIIRAV). The Cytoplasmic portion of the chain corresponds to 137 to 143 (KNIIRGQ). The helical transmembrane segment at 144–163 (VFDEHFLMALATIGAFLIQQ) threads the bilayer. The Extracellular portion of the chain corresponds to 164-166 (YPE). The helical transmembrane segment at 167-186 (GVAVMLFYQIGELFQGAAVS) threads the bilayer. At 187 to 320 (RSRKSISALM…ITKFAKYYTP (134 aa)) the chain is on the cytoplasmic side. A helical membrane pass occupies residues 321-339 (AVVIIAVLLAFVPPLVLSG). The Extracellular portion of the chain corresponds to 340–345 (AALSDW). The chain crosses the membrane as a helical span at residues 346–363 (VYRALIFLVISCPCALVV). The Cytoplasmic segment spans residues 364–648 (SIPLGFFGGI…AIRIAKRTRR (285 aa)). Residue Asp401 is the 4-aspartylphosphate intermediate of the active site. Mg(2+) contacts are provided by Asp595 and Asp599. The chain crosses the membrane as a helical span at residues 649 to 670 (IVWQNIGFALGVKAIFLILGAF). Residues 671–678 (GIATMWEA) are Extracellular-facing. The chain crosses the membrane as a helical span at residues 679 to 694 (VFSDVGVTLLAVANAM). Topologically, residues 695–702 (RVMRLKNK) are cytoplasmic.

Belongs to the cation transport ATPase (P-type) (TC 3.A.3) family. Type IB subfamily.

The protein localises to the cell membrane. The enzyme catalyses Zn(2+)(in) + ATP + H2O = Zn(2+)(out) + ADP + phosphate + H(+). It carries out the reaction Cd(2+)(in) + ATP + H2O = Cd(2+)(out) + ADP + phosphate + H(+). Couples the hydrolysis of ATP with the transport of cadmium, zinc and cobalt out of the cell. Does not seem to transport copper. In Bacillus subtilis (strain 168), this protein is Cadmium, zinc and cobalt-transporting ATPase (cadA).